We begin with the raw amino-acid sequence, 146 residues long: Hemoglobin subunit beta (146 aa).

Valine 1 carries the post-translational modification N-acetylvaline. Positions 2–146 (HLTPEEKVAV…VANALAHKYH (145 aa)) constitute a Globin domain. Threonine 12 is subject to Phosphothreonine. Serine 44 bears the Phosphoserine mark. An N6-acetyllysine modification is found at lysine 59. Histidine 63 lines the heme b pocket. At lysine 82 the chain carries N6-acetyllysine. Heme b is bound at residue histidine 92. The residue at position 93 (cysteine 93) is an S-nitrosocysteine. Lysine 144 bears the N6-acetyllysine mark.

The protein belongs to the globin family. In terms of assembly, heterotetramer of two alpha chains and two beta chains. Red blood cells.

Involved in oxygen transport from the lung to the various peripheral tissues. This Cercocebus atys (Sooty mangabey) protein is Hemoglobin subunit beta (HBB).